Here is a 217-residue protein sequence, read N- to C-terminus: 7-cyano-7-deazaguanine synthase (217 aa).

10–20 lines the ATP pocket; the sequence is FSGGQDSTTCL. Zn(2+) contacts are provided by cysteine 185, cysteine 194, cysteine 197, and cysteine 200.

The protein belongs to the QueC family. Homodimer. Requires Zn(2+) as cofactor.

It catalyses the reaction 7-carboxy-7-deazaguanine + NH4(+) + ATP = 7-cyano-7-deazaguanine + ADP + phosphate + H2O + H(+). The protein operates within purine metabolism; 7-cyano-7-deazaguanine biosynthesis. Its function is as follows. Catalyzes the ATP-dependent conversion of 7-carboxy-7-deazaguanine (CDG) to 7-cyano-7-deazaguanine (preQ(0)). The polypeptide is 7-cyano-7-deazaguanine synthase (Streptococcus mutans serotype c (strain ATCC 700610 / UA159)).